The following is a 305-amino-acid chain: UDP-3-O-acyl-N-acetylglucosamine deacetylase (305 aa).

Positions 78, 237, and 241 each coordinate Zn(2+). H264 acts as the Proton donor in catalysis.

This sequence belongs to the LpxC family. The cofactor is Zn(2+).

It carries out the reaction a UDP-3-O-[(3R)-3-hydroxyacyl]-N-acetyl-alpha-D-glucosamine + H2O = a UDP-3-O-[(3R)-3-hydroxyacyl]-alpha-D-glucosamine + acetate. It participates in glycolipid biosynthesis; lipid IV(A) biosynthesis; lipid IV(A) from (3R)-3-hydroxytetradecanoyl-[acyl-carrier-protein] and UDP-N-acetyl-alpha-D-glucosamine: step 2/6. Functionally, catalyzes the hydrolysis of UDP-3-O-myristoyl-N-acetylglucosamine to form UDP-3-O-myristoylglucosamine and acetate, the committed step in lipid A biosynthesis. This is UDP-3-O-acyl-N-acetylglucosamine deacetylase from Burkholderia cenocepacia (strain HI2424).